We begin with the raw amino-acid sequence, 376 residues long: Hydroxylysine kinase (376 aa).

Asp229 (proton acceptor) is an active-site residue.

This sequence belongs to the aminoglycoside phosphotransferase family.

It localises to the cytoplasm. The enzyme catalyses (5R)-5-hydroxy-L-lysine + GTP = (5R)-5-phosphooxy-L-lysine + GDP + H(+). In terms of biological role, catalyzes the GTP-dependent phosphorylation of 5-hydroxy-L-lysine. The polypeptide is Hydroxylysine kinase (Hykk) (Mus musculus (Mouse)).